A 20-amino-acid polypeptide reads, in one-letter code: Protein PR-L5 (20 aa).

The protein belongs to the BetVI family.

This Lupinus luteus (European yellow lupine) protein is Protein PR-L5.